Consider the following 152-residue polypeptide: Protein Smg homolog (152 aa).

The protein belongs to the Smg family.

The protein is Protein Smg homolog of Chromobacterium violaceum (strain ATCC 12472 / DSM 30191 / JCM 1249 / CCUG 213 / NBRC 12614 / NCIMB 9131 / NCTC 9757 / MK).